The primary structure comprises 1405 residues: Sterol 3-beta-glucosyltransferase (1405 aa).

Basic and acidic residues-rich tracts occupy residues 1–16 (MRPF…DRKL) and 95–105 (TGQRPRKESSV). 3 disordered regions span residues 1–27 (MRPF…SASR), 83–186 (ARFD…SATP), and 203–230 (DLKA…ASVS). Positions 106–115 (RKGTSVSVNT) are enriched in polar residues. The span at 116-126 (SSLDPSQRSSS) shows a compositional bias: low complexity. The segment covering 206–218 (ASSTERSQSSLNE) has biased composition (polar residues). Residues 246 to 285 (EKVLVEYACSLLQSMLLQGYMYVTEGHICFYAYLPKKSTV) enclose the GRAM 1 domain. One can recognise a PH domain in the interval 285–384 (VAIKSGYLHK…WVKALQKVIF (100 aa)). Disordered regions lie at residues 461–526 (SQHL…DSSD) and 566–642 (TIYG…SGAP). Positions 483 to 493 (RWSLTSGTSRA) are enriched in polar residues. Residues 570-589 (LDRRPSGRERRGRRNSDETA) are compositionally biased toward basic and acidic residues. The segment covering 590–603 (RSPSTRVNVGTGQQ) has biased composition (polar residues). A compositionally biased stretch (basic and acidic residues) spans 606-624 (ELDRRTDGNTSGREARDTT). Over residues 626–642 (ESDQYTQDPTKSFSGAP) the composition is skewed to polar residues. The 67-residue stretch at 724 to 790 (DRFRAHFALP…RDIENVEKEK (67 aa)) folds into the GRAM 2 domain. Residues Ser911, Arg912, Asp914, Ala1214, His1216, His1229, Gly1233, Thr1234, Asp1253, and Gln1254 each contribute to the UDP-alpha-D-glucose site. Positions 1330-1367 (SIASSTPFSPTPSAKTAAEQDADDDVEDSEEWTFVGDD) are disordered. A compositionally biased stretch (low complexity) spans 1332–1348 (ASSTPFSPTPSAKTAAE). Positions 1349 to 1367 (QDADDDVEDSEEWTFVGDD) are enriched in acidic residues.

It belongs to the glycosyltransferase 28 family.

The protein resides in the cytoplasm. The protein localises to the preautophagosomal structure membrane. The enzyme catalyses a sterol + UDP-alpha-D-glucose = a sterol 3-beta-D-glucoside + UDP + H(+). It catalyses the reaction ergosterol + UDP-alpha-D-glucose = ergosteryl 3-beta-D-glucoside + UDP + H(+). Its function is as follows. Sterol glycosyltransferase responsible for the glycosylation of ergosterol to form ergosterol-glucoside. The polypeptide is Sterol 3-beta-glucosyltransferase (Aspergillus fumigatus (strain ATCC MYA-4609 / CBS 101355 / FGSC A1100 / Af293) (Neosartorya fumigata)).